Reading from the N-terminus, the 119-residue chain is Toxin ICK-8 (119 aa).

Positions 1-19 (MMKLYSLVIIATLAAAAFA) are cleaved as a signal peptide. Cystine bridges form between Cys59–Cys74, Cys67–Cys80, Cys71–Cys116, and Cys73–Cys87.

Belongs to the neurotoxin 25 family. ICK-8 subfamily. In terms of tissue distribution, expressed by the venom gland.

Its subcellular location is the secreted. Functionally, ion channel inhibitor. This chain is Toxin ICK-8, found in Trittame loki (Brush-footed trapdoor spider).